The chain runs to 316 residues: Retinol dehydrogenase 12 (316 aa).

46-52 contacts NADP(+); it reads GANTGIG. Position 175 (S175) interacts with substrate. The Proton acceptor role is filled by Y200.

This sequence belongs to the short-chain dehydrogenases/reductases (SDR) family. As to expression, expressed in the inner segments of the photoreceptor in retina.

The catalysed reaction is all-trans-retinol + NADP(+) = all-trans-retinal + NADPH + H(+). It carries out the reaction 11-cis-retinol + NADP(+) = 11-cis-retinal + NADPH + H(+). The enzyme catalyses 9-cis-retinol + NADP(+) = 9-cis-retinal + NADPH + H(+). It catalyses the reaction a 4-hydroxynonen-1-ol + NADP(+) = a 4-hydroxynonenal + NADPH + H(+). The catalysed reaction is (E)-non-2-en-1-ol + NADP(+) = (E)-non-2-enal + NADPH + H(+). It carries out the reaction (Z)-non-6-en-1-ol + NADP(+) = (Z)-non-6-enal + NADPH + H(+). The enzyme catalyses nonan-1-ol + NADP(+) = nonanal + NADPH + H(+). The protein operates within cofactor metabolism; retinol metabolism. Functionally, retinoids dehydrogenase/reductase with a clear preference for NADP. Displays high activity towards 9-cis, 11-cis and all-trans-retinal. Shows very weak activity toward 13-cis-retinol. Also exhibits activity, albeit with lower affinity than for retinaldehydes, towards lipid peroxidation products (C9 aldehydes) such as 4-hydroxynonenal and trans-2-nonenal. Plays an important function in photoreceptor cells to detoxify 4-hydroxynonenal and potentially other toxic aldehyde products resulting from lipid peroxidation. Has no dehydrogenase activity towards steroids. In Mus musculus (Mouse), this protein is Retinol dehydrogenase 12 (Rdh12).